Reading from the N-terminus, the 205-residue chain is High frequency lysogenization protein HflD homolog (205 aa).

It belongs to the HflD family.

The protein localises to the cytoplasm. It localises to the cell inner membrane. This Shewanella piezotolerans (strain WP3 / JCM 13877) protein is High frequency lysogenization protein HflD homolog.